A 317-amino-acid polypeptide reads, in one-letter code: Protoheme IX farnesyltransferase (317 aa).

A run of 9 helical transmembrane segments spans residues 36 to 56 (VMVLVIFTALVGMVVSDATVN), 57 to 77 (PVIAAISLLMIAVGAGASGCL), 108 to 128 (LAFGIVLSVGSVLILGLASNW), 129 to 149 (LAAGLLAFTIVFYAVIYSMWL), 157 to 177 (IVIGGAAGALPPVVGQAAVTG), 184 to 204 (LVLFAIIFIWTPPHFWALALV), 230 to 247 (IIWYSLVLAPLALLPVWL), 251 to 273 (GWLYAVVGVLGGLGMLAGAVQVY), and 284 to 304 (AAMGLFAFSILYLFLLFSALL).

The protein belongs to the UbiA prenyltransferase family. Protoheme IX farnesyltransferase subfamily.

The protein resides in the cell inner membrane. It carries out the reaction heme b + (2E,6E)-farnesyl diphosphate + H2O = Fe(II)-heme o + diphosphate. It participates in porphyrin-containing compound metabolism; heme O biosynthesis; heme O from protoheme: step 1/1. Functionally, converts heme B (protoheme IX) to heme O by substitution of the vinyl group on carbon 2 of heme B porphyrin ring with a hydroxyethyl farnesyl side group. The polypeptide is Protoheme IX farnesyltransferase (Methylorubrum extorquens (strain CM4 / NCIMB 13688) (Methylobacterium extorquens)).